A 492-amino-acid polypeptide reads, in one-letter code: GTPase-GDP dissociation stimulator arz1 (492 aa).

Its subcellular location is the cytoplasm. It localises to the nucleus. In terms of biological role, probably acts as a GEF (guanine nucleotide exchange factor) for the Rho family of small GTP-binding proteins (G proteins) that stimulates the dissociation of GDP to enable subsequent binding of GTP. May also chaperone the processing and/or trafficking of small GTPases independently of GEF activity. May be involved in the control of polarized cell growth via CDC42-mediated signaling. May also be involved in the control of cell-wall organization via RHO1-mediated signaling. This Schizosaccharomyces pombe (strain 972 / ATCC 24843) (Fission yeast) protein is GTPase-GDP dissociation stimulator arz1.